We begin with the raw amino-acid sequence, 602 residues long: DNA mismatch repair protein MutL (602 aa).

Positions 337–367 (KRPFPGSSTNYSGIQQDTKKQESDNPEKARG) are disordered. Polar residues predominate over residues 342 to 352 (GSSTNYSGIQQ). The segment covering 353 to 367 (DTKKQESDNPEKARG) has biased composition (basic and acidic residues).

This sequence belongs to the DNA mismatch repair MutL/HexB family.

Its function is as follows. This protein is involved in the repair of mismatches in DNA. It is required for dam-dependent methyl-directed DNA mismatch repair. May act as a 'molecular matchmaker', a protein that promotes the formation of a stable complex between two or more DNA-binding proteins in an ATP-dependent manner without itself being part of a final effector complex. This Kosmotoga olearia (strain ATCC BAA-1733 / DSM 21960 / TBF 19.5.1) protein is DNA mismatch repair protein MutL.